The sequence spans 219 residues: Probable GTP-binding protein EngB (219 aa).

The 175-residue stretch at 26–200 folds into the EngB-type G domain; it reads EGVEIAFAGR…RAKLDTWFAP (175 aa). Residues 34–41, 61–65, 79–82, 146–149, and 179–181 contribute to the GTP site; these read GRSNAGKS, GRTQL, DLPG, TKAD, and FSS. Residues Ser-41 and Thr-63 each coordinate Mg(2+).

Belongs to the TRAFAC class TrmE-Era-EngA-EngB-Septin-like GTPase superfamily. EngB GTPase family. Requires Mg(2+) as cofactor.

Its function is as follows. Necessary for normal cell division and for the maintenance of normal septation. This chain is Probable GTP-binding protein EngB, found in Vibrio parahaemolyticus serotype O3:K6 (strain RIMD 2210633).